The sequence spans 399 residues: Elongation factor Tu (399 aa).

The tr-type G domain maps to 10–207 (KPHLNIGTIG…AVDNYVPEPQ (198 aa)). A G1 region spans residues 19-26 (GHIDHGKT). A GTP-binding site is contributed by 19–26 (GHIDHGKT). Thr26 provides a ligand contact to Mg(2+). The segment at 60–64 (GITIN) is G2. The G3 stretch occupies residues 81–84 (DCPG). Residues 81-85 (DCPGH) and 136-139 (NKVD) contribute to the GTP site. The G4 stretch occupies residues 136–139 (NKVD). Positions 174–176 (SAL) are G5.

Belongs to the TRAFAC class translation factor GTPase superfamily. Classic translation factor GTPase family. EF-Tu/EF-1A subfamily. In terms of assembly, monomer.

Its subcellular location is the cytoplasm. It catalyses the reaction GTP + H2O = GDP + phosphate + H(+). Functionally, GTP hydrolase that promotes the GTP-dependent binding of aminoacyl-tRNA to the A-site of ribosomes during protein biosynthesis. The polypeptide is Elongation factor Tu (Kosmotoga olearia (strain ATCC BAA-1733 / DSM 21960 / TBF 19.5.1)).